Reading from the N-terminus, the 413-residue chain is Multidrug resistance protein MdtA (413 aa).

Positions methionine 1–alanine 20 are cleaved as a signal peptide. Disordered regions lie at residues serine 31–proline 57 and glutamate 391–alanine 413. The span at alanine 397 to alanine 413 shows a compositional bias: basic and acidic residues.

Belongs to the membrane fusion protein (MFP) (TC 8.A.1) family. In terms of assembly, part of a tripartite efflux system composed of MdtA, MdtB and MdtC.

It localises to the cell inner membrane. The sequence is that of Multidrug resistance protein MdtA from Salmonella paratyphi C (strain RKS4594).